The chain runs to 156 residues: ATP synthase subunit b (156 aa).

The helical transmembrane segment at 7–26 threads the bilayer; that stretch reads ILGQAIAFVLFVWFCMKYVW.

The protein belongs to the ATPase B chain family. As to quaternary structure, F-type ATPases have 2 components, F(1) - the catalytic core - and F(0) - the membrane proton channel. F(1) has five subunits: alpha(3), beta(3), gamma(1), delta(1), epsilon(1). F(0) has three main subunits: a(1), b(2) and c(10-14). The alpha and beta chains form an alternating ring which encloses part of the gamma chain. F(1) is attached to F(0) by a central stalk formed by the gamma and epsilon chains, while a peripheral stalk is formed by the delta and b chains.

It is found in the cell inner membrane. Functionally, f(1)F(0) ATP synthase produces ATP from ADP in the presence of a proton or sodium gradient. F-type ATPases consist of two structural domains, F(1) containing the extramembraneous catalytic core and F(0) containing the membrane proton channel, linked together by a central stalk and a peripheral stalk. During catalysis, ATP synthesis in the catalytic domain of F(1) is coupled via a rotary mechanism of the central stalk subunits to proton translocation. Its function is as follows. Component of the F(0) channel, it forms part of the peripheral stalk, linking F(1) to F(0). In Pectobacterium atrosepticum (strain SCRI 1043 / ATCC BAA-672) (Erwinia carotovora subsp. atroseptica), this protein is ATP synthase subunit b.